Consider the following 418-residue polypeptide: UDP-N-acetylglucosamine 1-carboxyvinyltransferase (418 aa).

Lys23–Asn24 lines the phosphoenolpyruvate pocket. A UDP-N-acetyl-alpha-D-glucosamine-binding site is contributed by Arg93. The Proton donor role is filled by Asp117. UDP-N-acetyl-alpha-D-glucosamine is bound by residues Asp305 and Val327.

The protein belongs to the EPSP synthase family. MurA subfamily.

It localises to the cytoplasm. The catalysed reaction is phosphoenolpyruvate + UDP-N-acetyl-alpha-D-glucosamine = UDP-N-acetyl-3-O-(1-carboxyvinyl)-alpha-D-glucosamine + phosphate. The protein operates within cell wall biogenesis; peptidoglycan biosynthesis. In terms of biological role, cell wall formation. Adds enolpyruvyl to UDP-N-acetylglucosamine. This is UDP-N-acetylglucosamine 1-carboxyvinyltransferase from Mycobacterium bovis (strain ATCC BAA-935 / AF2122/97).